The following is a 432-amino-acid chain: Pentatricopeptide repeat-containing protein 2, mitochondrial (432 aa).

The transit peptide at 1–33 directs the protein to the mitochondrion; the sequence is MQFIKRTFPRRAFVDLLLNRFCLREFATTYSVS. 4 PPR repeats span residues 108–142, 143–179, 360–394, and 395–429; these read KTVAYNLVLQYHLAKGHYNAAWSLYNDMKKRQQKP, SDHTYSILLKGFCDAIEKNKQGNFSKLREYSEKVTAS, NLQVYHEKLRNLVQQGQAAECLNTIKRMSHNGPFP, and TQQTFLIVLSLCKRPKFYSYTKSFLDLAKKLNVPV.

The protein localises to the mitochondrion. In terms of biological role, mitochondrial RNA-binding protein that acts as a general translation factor. Plays a critical role in the synthesis of all mitochondrial DNA-encoded oxidative phosphorylation subunits, which are essential for mitochondrial respiration. Essential for the expression of iron-sulfur cluster (ISC) proteins as well as other heme proteins related to iron-sensing, and thus plays a key role in iron homeostasis. The polypeptide is Pentatricopeptide repeat-containing protein 2, mitochondrial (Schizosaccharomyces pombe (strain 972 / ATCC 24843) (Fission yeast)).